A 311-amino-acid polypeptide reads, in one-letter code: tRNA-cytidine(32) 2-sulfurtransferase (311 aa).

The PP-loop motif motif lies at 47–52 (SGGKDS). Cysteine 122, cysteine 125, and cysteine 213 together coordinate [4Fe-4S] cluster.

This sequence belongs to the TtcA family. In terms of assembly, homodimer. Mg(2+) is required as a cofactor. Requires [4Fe-4S] cluster as cofactor.

It localises to the cytoplasm. The enzyme catalyses cytidine(32) in tRNA + S-sulfanyl-L-cysteinyl-[cysteine desulfurase] + AH2 + ATP = 2-thiocytidine(32) in tRNA + L-cysteinyl-[cysteine desulfurase] + A + AMP + diphosphate + H(+). It functions in the pathway tRNA modification. In terms of biological role, catalyzes the ATP-dependent 2-thiolation of cytidine in position 32 of tRNA, to form 2-thiocytidine (s(2)C32). The sulfur atoms are provided by the cysteine/cysteine desulfurase (IscS) system. This Shigella boydii serotype 18 (strain CDC 3083-94 / BS512) protein is tRNA-cytidine(32) 2-sulfurtransferase.